The chain runs to 137 residues: DNA-directed RNA polymerase subunit omega (137 aa).

Residues 78–137 (DEPEPEAVPLLSSSPAAAAVAPQAASGDDNDIQFDRMSEEDLLRGLENLAPPTETEDEGD) form a disordered region. Positions 84-103 (AVPLLSSSPAAAAVAPQAAS) are enriched in low complexity. The segment covering 110 to 121 (QFDRMSEEDLLR) has biased composition (basic and acidic residues).

Belongs to the RNA polymerase subunit omega family. In terms of assembly, the RNAP catalytic core consists of 2 alpha, 1 beta, 1 beta' and 1 omega subunit. When a sigma factor is associated with the core the holoenzyme is formed, which can initiate transcription.

The catalysed reaction is RNA(n) + a ribonucleoside 5'-triphosphate = RNA(n+1) + diphosphate. In terms of biological role, promotes RNA polymerase assembly. Latches the N- and C-terminal regions of the beta' subunit thereby facilitating its interaction with the beta and alpha subunits. In Methylobacterium sp. (strain 4-46), this protein is DNA-directed RNA polymerase subunit omega.